A 586-amino-acid polypeptide reads, in one-letter code: Putative ABC transporter ATP-binding protein MG187 homolog (586 aa).

Positions isoleucine 13–leucine 464 constitute an ABC transporter domain. Glycine 45 to threonine 52 provides a ligand contact to ATP.

This sequence belongs to the ABC transporter superfamily.

The polypeptide is Putative ABC transporter ATP-binding protein MG187 homolog (Mycoplasma pneumoniae (strain ATCC 29342 / M129 / Subtype 1) (Mycoplasmoides pneumoniae)).